We begin with the raw amino-acid sequence, 119 residues long: Large ribosomal subunit protein uL18 (119 aa).

It belongs to the universal ribosomal protein uL18 family. In terms of assembly, part of the 50S ribosomal subunit; part of the 5S rRNA/L5/L18/L25 subcomplex. Contacts the 5S and 23S rRNAs.

Functionally, this is one of the proteins that bind and probably mediate the attachment of the 5S RNA into the large ribosomal subunit, where it forms part of the central protuberance. The polypeptide is Large ribosomal subunit protein uL18 (Nitrosomonas europaea (strain ATCC 19718 / CIP 103999 / KCTC 2705 / NBRC 14298)).